A 180-amino-acid polypeptide reads, in one-letter code: Ribosome maturation factor RimM (180 aa).

The 74-residue stretch at 104–177 (EGEFHLLDLV…WLLLTPPPGL (74 aa)) folds into the PRC barrel domain.

This sequence belongs to the RimM family. Binds ribosomal protein uS19.

The protein localises to the cytoplasm. In terms of biological role, an accessory protein needed during the final step in the assembly of 30S ribosomal subunit, possibly for assembly of the head region. Essential for efficient processing of 16S rRNA. May be needed both before and after RbfA during the maturation of 16S rRNA. It has affinity for free ribosomal 30S subunits but not for 70S ribosomes. This is Ribosome maturation factor RimM from Synechococcus sp. (strain CC9902).